The sequence spans 316 residues: Small ribosomal subunit biogenesis GTPase RsgA (316 aa).

A disordered region spans residues 1 to 20 (MSKLSHQQQRRIHNHRQNKL). Residues 8-18 (QQRRIHNHRQN) are compositionally biased toward basic residues. Residues 92–251 (AGKLKPVASN…IIDTPGVRGF (160 aa)) form the CP-type G domain. GTP-binding positions include 139-142 (NKSD) and 193-201 (GQSGVGKSS). The Zn(2+) site is built by cysteine 275, cysteine 280, histidine 282, and cysteine 288.

Belongs to the TRAFAC class YlqF/YawG GTPase family. RsgA subfamily. In terms of assembly, monomer. Associates with 30S ribosomal subunit, binds 16S rRNA. It depends on Zn(2+) as a cofactor.

It is found in the cytoplasm. In terms of biological role, one of several proteins that assist in the late maturation steps of the functional core of the 30S ribosomal subunit. Helps release RbfA from mature subunits. May play a role in the assembly of ribosomal proteins into the subunit. Circularly permuted GTPase that catalyzes slow GTP hydrolysis, GTPase activity is stimulated by the 30S ribosomal subunit. The protein is Small ribosomal subunit biogenesis GTPase RsgA of Dichelobacter nodosus (strain VCS1703A).